Consider the following 245-residue polypeptide: Ureidoacrylate amidohydrolase RutB (245 aa).

Asp41 functions as the Proton acceptor in the catalytic mechanism. Lys150 is an active-site residue. The active-site Nucleophile is the Cys183.

The protein belongs to the isochorismatase family. RutB subfamily.

It catalyses the reaction (Z)-3-ureidoacrylate + H2O + H(+) = (Z)-3-aminoacrylate + NH4(+) + CO2. The enzyme catalyses (Z)-3-ureidoacrylate + H2O = (Z)-3-aminoacrylate + carbamate + H(+). The catalysed reaction is (Z)-2-methylureidoacrylate + H2O + H(+) = (Z)-2-methylaminoacrylate + NH4(+) + CO2. Its function is as follows. Hydrolyzes ureidoacrylate to form aminoacrylate and carbamate. The carbamate hydrolyzes spontaneously, thereby releasing one of the nitrogen atoms of the pyrimidine ring as ammonia and one of its carbon atoms as CO2. The chain is Ureidoacrylate amidohydrolase RutB from Pseudomonas syringae pv. syringae (strain B728a).